Reading from the N-terminus, the 362-residue chain is Histidine protein methyltransferase 1 homolog (362 aa).

Residues 18-88 (TSLDDGTCVL…EACKHQPSWK (71 aa)) form a disordered region. Positions 30–51 (QKGKQDKRQSTERPGLPRDHSW) are enriched in basic and acidic residues. Over residues 52-65 (KCSSLGNAASSEDT) the composition is skewed to polar residues. 2 positions are modified to phosphoserine: Ser-62 and Ser-67. Over residues 73–82 (DRSDDPEACK) the composition is skewed to basic and acidic residues. Position 144 is a tele-methylhistidine (His-144). S-adenosyl-L-methionine contacts are provided by residues 158–162 (IWECT), Gly-185, and 206–208 (QDY). Residues 237 to 243 (PDGKRQR) carry the Nuclear localization signal motif. S-adenosyl-L-methionine-binding positions include 259 to 261 (GEW) and Ser-283.

The protein belongs to the methyltransferase superfamily. METTL18 family. As to quaternary structure, interacts with GRWD1 and members of the heat shock protein 90 and 70 families; these proteins may possibly be methylation substrates for the enzyme. Monomethylated at His-144 through automethylation. Automethylation at His-144 positively regulates the methyltransferase activity toward RPL3. Probably methylated on other residues.

It localises to the cytoplasm. It is found in the cytosol. Its subcellular location is the nucleus. The protein resides in the nucleolus. It carries out the reaction L-histidyl-[protein] + S-adenosyl-L-methionine = N(tele)-methyl-L-histidyl-[protein] + S-adenosyl-L-homocysteine + H(+). Protein-L-histidine N-tele-methyltransferase that specifically monomethylates RPL3, thereby regulating translation elongation. Histidine methylation of RPL3 regulates translation elongation by slowing ribosome traversal on tyrosine codons: slower elongation provides enough time for proper folding of synthesized proteins and prevents cellular aggregation of tyrosine-rich proteins. In Mus musculus (Mouse), this protein is Histidine protein methyltransferase 1 homolog.